Here is a 183-residue protein sequence, read N- to C-terminus: Peptide deformylase (183 aa).

C110 and H153 together coordinate Fe cation. E154 is an active-site residue. Fe cation is bound at residue H157.

Belongs to the polypeptide deformylase family. Fe(2+) serves as cofactor.

It carries out the reaction N-terminal N-formyl-L-methionyl-[peptide] + H2O = N-terminal L-methionyl-[peptide] + formate. Functionally, removes the formyl group from the N-terminal Met of newly synthesized proteins. Requires at least a dipeptide for an efficient rate of reaction. N-terminal L-methionine is a prerequisite for activity but the enzyme has broad specificity at other positions. The protein is Peptide deformylase of Shouchella clausii (strain KSM-K16) (Alkalihalobacillus clausii).